A 281-amino-acid chain; its full sequence is Large ribosomal subunit protein uL2 (281 aa).

The segment at 213-281 is disordered; that stretch reads RNRHKGIRPT…LIIRRRKESK (69 aa).

Belongs to the universal ribosomal protein uL2 family. In terms of assembly, part of the 50S ribosomal subunit. Forms a bridge to the 30S subunit in the 70S ribosome.

In terms of biological role, one of the primary rRNA binding proteins. Required for association of the 30S and 50S subunits to form the 70S ribosome, for tRNA binding and peptide bond formation. It has been suggested to have peptidyltransferase activity; this is somewhat controversial. Makes several contacts with the 16S rRNA in the 70S ribosome. This is Large ribosomal subunit protein uL2 from Mycoplasmopsis pulmonis (strain UAB CTIP) (Mycoplasma pulmonis).